Consider the following 125-residue polypeptide: uncharacterized protein (125 aa).

2 disordered regions span residues 1–27 (MNKTVGPPTITPTGLSGGMNSTTGSSS) and 76–125 (NKNN…RFKK). Residues 18–27 (GMNSTTGSSS) are compositionally biased toward low complexity.

This is an uncharacterized protein from Dictyostelium discoideum (Social amoeba).